Reading from the N-terminus, the 626-residue chain is Chaperone protein HtpG (626 aa).

The a; substrate-binding stretch occupies residues 1 to 341 (MIKKEFKAES…SEDLSLNISR (341 aa)). Residues 342-552 (EMLQHDRQLK…DGDVTIEMEK (211 aa)) form a b region. The c stretch occupies residues 553-626 (ILSAMPNNQE…FTNDICKLMS (74 aa)).

The protein belongs to the heat shock protein 90 family. As to quaternary structure, homodimer.

Its subcellular location is the cytoplasm. Molecular chaperone. Has ATPase activity. This chain is Chaperone protein HtpG, found in Alkaliphilus metalliredigens (strain QYMF).